The chain runs to 318 residues: Glycine--tRNA ligase alpha subunit (318 aa).

It belongs to the class-II aminoacyl-tRNA synthetase family. As to quaternary structure, tetramer of two alpha and two beta subunits.

It localises to the cytoplasm. The catalysed reaction is tRNA(Gly) + glycine + ATP = glycyl-tRNA(Gly) + AMP + diphosphate. The protein is Glycine--tRNA ligase alpha subunit of Methylibium petroleiphilum (strain ATCC BAA-1232 / LMG 22953 / PM1).